Consider the following 369-residue polypeptide: uncharacterized protein (369 aa).

Transmembrane regions (helical) follow at residues Gln-25–Trp-45, Phe-47–Glu-67, Leu-119–Met-139, Ile-152–Leu-172, Gly-206–Ile-226, Leu-235–Leu-255, Leu-268–Ile-288, Leu-295–Phe-315, and Trp-323–Phe-343.

To B.subtilis ComEC.

Its subcellular location is the cell membrane. This is an uncharacterized protein from Mycoplasma pneumoniae (strain ATCC 29342 / M129 / Subtype 1) (Mycoplasmoides pneumoniae).